Here is a 550-residue protein sequence, read N- to C-terminus: Glucose-6-phosphate isomerase 1 (550 aa).

Residue Glu-353 is the Proton donor of the active site. Catalysis depends on residues His-384 and Lys-512.

The protein belongs to the GPI family.

It is found in the cytoplasm. It catalyses the reaction alpha-D-glucose 6-phosphate = beta-D-fructose 6-phosphate. It participates in carbohydrate biosynthesis; gluconeogenesis. It functions in the pathway carbohydrate degradation; glycolysis; D-glyceraldehyde 3-phosphate and glycerone phosphate from D-glucose: step 2/4. In terms of biological role, catalyzes the reversible isomerization of glucose-6-phosphate to fructose-6-phosphate. In Thiobacillus denitrificans (strain ATCC 25259 / T1), this protein is Glucose-6-phosphate isomerase 1.